A 376-amino-acid chain; its full sequence is Homeobox protein extradenticle (376 aa).

Positions 16 to 35 (APQGYSLSGQDDGQNTGNEN) are disordered. The span at 20–34 (YSLSGQDDGQNTGNE) shows a compositional bias: polar residues. The PBC domain maps to 38-237 (RKQKDIGEIL…VMILRSRFLD (200 aa)). The PBC-A stretch occupies residues 45-124 (EILQQIMSIS…EGVAGPEKGG (80 aa)). The tract at residues 127–237 (AAAASAAAAS…VMILRSRFLD (111 aa)) is PBC-B. The homeobox; TALE-type DNA-binding region spans 238–300 (ARRKRRNFSK…NKRIRYKKNI (63 aa)). Low complexity predominate over residues 318 to 335 (ASPYSMAGPPSGTTTPMM). A disordered region spans residues 318 to 376 (ASPYSMAGPPSGTTTPMMSPAPPQDSMGYTMGSGGYDQQQPYDNSMGGYDPNLHQDLSP).

Belongs to the TALE/PBX homeobox family. Interacts with Ubx and hth.

Its subcellular location is the nucleus. Its function is as follows. Transcription factor which acts with the selector homeodomain proteins altering the regulation of downstream target genes such as wingless (wg), teashirt (tsh) and decapentaplegic (dpp), thus affecting segmental identity. Delimits the eye field and prevent inappropriate eye development. Required for proper localization of chordotonal organs within the peripheral nervous system. In Drosophila pseudoobscura pseudoobscura (Fruit fly), this protein is Homeobox protein extradenticle.